The following is a 268-amino-acid chain: Enoyl-[acyl-carrier-protein] reductase [NADH] (268 aa).

NAD(+) contacts are provided by residues 20-21 (SI), 64-65 (DV), and 95-96 (IA). Residue tyrosine 157 coordinates substrate. Residues lysine 164 and isoleucine 193 each contribute to the NAD(+) site.

Belongs to the short-chain dehydrogenases/reductases (SDR) family. FabI subfamily. Homodimer. Homotetramer.

The enzyme catalyses a 2,3-saturated acyl-[ACP] + NAD(+) = a (2E)-enoyl-[ACP] + NADH + H(+). It catalyses the reaction a 2,3-saturated acyl-CoA + NAD(+) = a (2E)-enoyl-CoA + NADH + H(+). It functions in the pathway lipid metabolism; mycolic acid biosynthesis. Its function is as follows. Enoyl-ACP reductase of the type II fatty acid syntase (FAS-II) system, which is involved in the biosynthesis of mycolic acids, a major component of mycobacterial cell walls. Catalyzes the NADH-dependent reduction of the double bond of 2-trans-enoyl-[acyl-carrier protein], an essential step in the fatty acid elongation cycle of the FAS-II pathway. Shows preference for long-chain fatty acyl thioester substrates, and can also use 2-trans-enoyl-CoAs as alternative substrates. The mycobacterial FAS-II system utilizes the products of the FAS-I system as primers to extend fatty acyl chain lengths up to C56, forming the meromycolate chain that serves as the precursor for final mycolic acids. The polypeptide is Enoyl-[acyl-carrier-protein] reductase [NADH] (Mycobacterium avium).